The primary structure comprises 366 residues: 3-dehydroquinate synthase (366 aa).

Residues 74–79, 108–112, 132–133, Lys-144, Lys-153, and 171–174 contribute to the NAD(+) site; these read SGEAAK, GVVGD, TT, and FLRT. Glu-186, His-249, and His-266 together coordinate Zn(2+).

The protein belongs to the sugar phosphate cyclases superfamily. Dehydroquinate synthase family. It depends on Co(2+) as a cofactor. Zn(2+) is required as a cofactor. NAD(+) serves as cofactor.

Its subcellular location is the cytoplasm. It carries out the reaction 7-phospho-2-dehydro-3-deoxy-D-arabino-heptonate = 3-dehydroquinate + phosphate. It functions in the pathway metabolic intermediate biosynthesis; chorismate biosynthesis; chorismate from D-erythrose 4-phosphate and phosphoenolpyruvate: step 2/7. In terms of biological role, catalyzes the conversion of 3-deoxy-D-arabino-heptulosonate 7-phosphate (DAHP) to dehydroquinate (DHQ). The polypeptide is 3-dehydroquinate synthase (Geobacillus kaustophilus (strain HTA426)).